The primary structure comprises 243 residues: Beta-glucanase (243 aa).

An N-terminal signal peptide occupies residues 1–27; that stretch reads MSYRVKRMLMLLVTGLFLSLSTFAASA. Residues 29 to 243 form the GH16 domain; sequence AQTGGSFYEP…SLHWVRYTKR (215 aa). C61 and C90 form a disulfide bridge. Residue E134 is the Nucleophile of the active site. The Proton donor role is filled by E138.

This sequence belongs to the glycosyl hydrolase 16 family.

The enzyme catalyses Hydrolysis of (1-&gt;4)-beta-D-glucosidic linkages in beta-D-glucans containing (1-&gt;3)- and (1-&gt;4)-bonds.. This chain is Beta-glucanase (bg1), found in Bacillus licheniformis.